A 184-amino-acid chain; its full sequence is Large ribosomal subunit protein bL9 (184 aa).

The disordered stretch occupies residues 160–184 (LQNQKSEQQEAEQDANKEATDGDDS). Basic and acidic residues predominate over residues 173–184 (DANKEATDGDDS).

The protein belongs to the bacterial ribosomal protein bL9 family.

In terms of biological role, binds to the 23S rRNA. This Wolbachia pipientis wMel protein is Large ribosomal subunit protein bL9.